Reading from the N-terminus, the 709-residue chain is RxLR effector protein PITG_15110 (709 aa).

An N-terminal signal peptide occupies residues 1-18 (MHAYSAAVLMGLLMVAEG). The RxLR-dEER signature appears at 51 to 66 (RLLREPETTEASNEDR).

This sequence belongs to the RxLR effector family.

Its subcellular location is the secreted. The protein resides in the host cytoplasm. The protein localises to the host cytoskeleton. Its function is as follows. Effector that enhances P.infestans colonization of Nicotiana benthamiana leaves. The polypeptide is RxLR effector protein PITG_15110 (Phytophthora infestans (strain T30-4) (Potato late blight agent)).